The chain runs to 77 residues: Putative defensin-like protein 185 (77 aa).

Residues M1–A22 form the signal peptide. Intrachain disulfides connect C25–C77, C31–C54, C40–C71, and C44–C73.

It belongs to the DEFL family.

It localises to the secreted. This Arabidopsis thaliana (Mouse-ear cress) protein is Putative defensin-like protein 185 (LCR39).